The chain runs to 305 residues: tRNA-splicing endonuclease (305 aa).

Residues tyrosine 246, histidine 257, and lysine 287 contribute to the active site.

This sequence belongs to the tRNA-intron endonuclease family. Archaeal long subfamily. In terms of assembly, homodimer.

The enzyme catalyses pretRNA = a 3'-half-tRNA molecule with a 5'-OH end + a 5'-half-tRNA molecule with a 2',3'-cyclic phosphate end + an intron with a 2',3'-cyclic phosphate and a 5'-hydroxyl terminus.. Functionally, endonuclease that removes tRNA introns. Cleaves pre-tRNA at the 5'- and 3'-splice sites to release the intron. The products are an intron and two tRNA half-molecules bearing 2',3' cyclic phosphate and 5'-OH termini. Recognizes a pseudosymmetric substrate in which 2 bulged loops of 3 bases are separated by a stem of 4 bp. This chain is tRNA-splicing endonuclease, found in Archaeoglobus fulgidus (strain ATCC 49558 / DSM 4304 / JCM 9628 / NBRC 100126 / VC-16).